Consider the following 381-residue polypeptide: Creatine kinase B-type (381 aa).

The residue at position 4 (serine 4) is a Phosphoserine. Residues 11-98 (KLRFPAEDEF…FDPIIEDRHG (88 aa)) form the Phosphagen kinase N-terminal domain. A Phosphothreonine modification is found at threonine 35. Residue lysine 45 forms a Glycyl lysine isopeptide (Lys-Gly) (interchain with G-Cter in ubiquitin) linkage. Creatine is bound at residue valine 72. Basic and acidic residues predominate over residues 96 to 110 (RHGGYQPSDEHKTDL). The interval 96–122 (RHGGYQPSDEHKTDLNPDNLQGGDDLD) is disordered. Lysine 107 is covalently cross-linked (Glycyl lysine isopeptide (Lys-Gly) (interchain with G-Cter in ubiquitin)). Phosphotyrosine is present on tyrosine 125. The Phosphagen kinase C-terminal domain occupies 125 to 367 (YVLSSRVRTG…KLLIEMEQRL (243 aa)). ATP is bound by residues 128 to 132 (SSRVR), arginine 130, arginine 132, and histidine 191. Residues 130–138 (RVRTGRSIR) form an internal MTS-like signal region. Phosphoserine is present on serine 199. Residue glutamate 232 coordinates creatine. ATP is bound at residue arginine 236. Tyrosine 269 is subject to 3'-nitrotyrosine. Residue serine 285 participates in creatine binding. Arginine 292 provides a ligand contact to ATP. Residue serine 309 is modified to Phosphoserine. Residues arginine 320, 320 to 325 (RGTGGV), and aspartate 335 each bind ATP. Position 322 is a phosphothreonine (threonine 322). A Glycyl lysine isopeptide (Lys-Gly) (interchain with G-Cter in ubiquitin) cross-link involves residue lysine 381.

This sequence belongs to the ATP:guanido phosphotransferase family. In terms of assembly, dimer of identical or non-identical chains, which can be either B (brain type) or M (muscle type). With MM being the major form in skeletal muscle and myocardium, MB existing in myocardium, and BB existing in many tissues, especially brain. Interacts with SLC12A6 (via C-terminus); the interaction may be required for SLC12A6 potassium-chloride cotransport activity. Post-translationally, ubiquitinated by the ECS(ASB9) complex, leading to its degradation by the proteasome. As to expression, in the kidney localized primarily in the outer medulla in the thick ascending limb and distal convoluted tubule.

It is found in the cytoplasm. It localises to the cytosol. The protein resides in the mitochondrion. Its subcellular location is the cell membrane. It carries out the reaction creatine + ATP = N-phosphocreatine + ADP + H(+). Its function is as follows. Reversibly catalyzes the transfer of phosphate between ATP and various phosphogens (e.g. creatine phosphate). Creatine kinase isoenzymes play a central role in energy transduction in tissues with large, fluctuating energy demands, such as skeletal muscle, heart, brain and spermatozoa. Acts as a key regulator of adaptive thermogenesis as part of the futile creatine cycle: localizes to the mitochondria of thermogenic fat cells and acts by mediating phosphorylation of creatine to initiate a futile cycle of creatine phosphorylation and dephosphorylation. During the futile creatine cycle, creatine and N-phosphocreatine are in a futile cycle, which dissipates the high energy charge of N-phosphocreatine as heat without performing any mechanical or chemical work. The polypeptide is Creatine kinase B-type (Ckb) (Rattus norvegicus (Rat)).